Reading from the N-terminus, the 409-residue chain is LL-diaminopimelate aminotransferase (409 aa).

Positions 15 and 42 each coordinate substrate. Residues Tyr-72, 108 to 109, Tyr-132, Asn-186, Tyr-217, and 245 to 247 each bind pyridoxal 5'-phosphate; these read AK and SFS. Substrate is bound by residues Lys-109, Tyr-132, and Asn-186. N6-(pyridoxal phosphate)lysine is present on Lys-248. Residues Arg-256 and Asn-291 each contribute to the pyridoxal 5'-phosphate site. Substrate is bound by residues Asn-291 and Arg-386.

The protein belongs to the class-I pyridoxal-phosphate-dependent aminotransferase family. LL-diaminopimelate aminotransferase subfamily. Homodimer. Pyridoxal 5'-phosphate serves as cofactor.

The catalysed reaction is (2S,6S)-2,6-diaminopimelate + 2-oxoglutarate = (S)-2,3,4,5-tetrahydrodipicolinate + L-glutamate + H2O + H(+). The protein operates within amino-acid biosynthesis; L-lysine biosynthesis via DAP pathway; LL-2,6-diaminopimelate from (S)-tetrahydrodipicolinate (aminotransferase route): step 1/1. Involved in the synthesis of meso-diaminopimelate (m-DAP or DL-DAP), required for both lysine and peptidoglycan biosynthesis. Catalyzes the direct conversion of tetrahydrodipicolinate to LL-diaminopimelate. The protein is LL-diaminopimelate aminotransferase of Desulforapulum autotrophicum (strain ATCC 43914 / DSM 3382 / VKM B-1955 / HRM2) (Desulfobacterium autotrophicum).